The chain runs to 348 residues: Protein RecA (348 aa).

Residue 67–74 (GPESSGKT) participates in ATP binding.

It belongs to the RecA family.

Its subcellular location is the cytoplasm. Its function is as follows. Can catalyze the hydrolysis of ATP in the presence of single-stranded DNA, the ATP-dependent uptake of single-stranded DNA by duplex DNA, and the ATP-dependent hybridization of homologous single-stranded DNAs. It interacts with LexA causing its activation and leading to its autocatalytic cleavage. This is Protein RecA from Salinispora tropica (strain ATCC BAA-916 / DSM 44818 / JCM 13857 / NBRC 105044 / CNB-440).